The primary structure comprises 152 residues: Deoxyuridine 5'-triphosphate nucleotidohydrolase (152 aa).

Residues 71–73, asparagine 84, 88–90, and methionine 98 each bind substrate; these read RSG and LID.

The protein belongs to the dUTPase family. Requires Mg(2+) as cofactor.

It carries out the reaction dUTP + H2O = dUMP + diphosphate + H(+). The protein operates within pyrimidine metabolism; dUMP biosynthesis; dUMP from dCTP (dUTP route): step 2/2. Its function is as follows. This enzyme is involved in nucleotide metabolism: it produces dUMP, the immediate precursor of thymidine nucleotides and it decreases the intracellular concentration of dUTP so that uracil cannot be incorporated into DNA. The polypeptide is Deoxyuridine 5'-triphosphate nucleotidohydrolase (Shewanella baltica (strain OS185)).